The chain runs to 380 residues: Erythronate-4-phosphate dehydrogenase (380 aa).

Substrate contacts are provided by Ser45 and Thr66. NAD(+) is bound by residues Asp146 and Thr174. The active site involves Arg207. Asp231 contacts NAD(+). The active site involves Glu236. His253 acts as the Proton donor in catalysis. NAD(+) is bound at residue Gly256. Tyr257 contacts substrate.

Belongs to the D-isomer specific 2-hydroxyacid dehydrogenase family. PdxB subfamily. As to quaternary structure, homodimer.

Its subcellular location is the cytoplasm. It carries out the reaction 4-phospho-D-erythronate + NAD(+) = (R)-3-hydroxy-2-oxo-4-phosphooxybutanoate + NADH + H(+). Its pathway is cofactor biosynthesis; pyridoxine 5'-phosphate biosynthesis; pyridoxine 5'-phosphate from D-erythrose 4-phosphate: step 2/5. In terms of biological role, catalyzes the oxidation of erythronate-4-phosphate to 3-hydroxy-2-oxo-4-phosphonooxybutanoate. In Pseudomonas fluorescens (strain ATCC BAA-477 / NRRL B-23932 / Pf-5), this protein is Erythronate-4-phosphate dehydrogenase.